A 148-amino-acid chain; its full sequence is Arginine repressor (148 aa).

Belongs to the ArgR family.

It is found in the cytoplasm. Its pathway is amino-acid biosynthesis; L-arginine biosynthesis [regulation]. Functionally, regulates arginine biosynthesis genes. In Chlorobium chlorochromatii (strain CaD3), this protein is Arginine repressor.